A 341-amino-acid chain; its full sequence is Twinfilin-2 (341 aa).

ADF-H domains lie at 1 to 131 and 169 to 305; these read ATEE…KHLS and GLAF…DEVH. Lys6 carries the N6-acetyllysine modification. A Phosphotyrosine modification is found at Tyr301. The segment at 314-341 is disordered; the sequence is AFAKPKGPGGKRGHKRLIRGPGENGDDS. Positions 322-331 are enriched in basic residues; it reads GGKRGHKRLI. At Ser341 the chain carries Phosphoserine.

The protein belongs to the actin-binding proteins ADF family. Twinfilin subfamily. As to quaternary structure, interacts with G-actin; ADP-actin form and capping protein (CP). May also be able to interact with TWF1 and phosphoinositides, PI(4,5)P2. When bound to PI(4,5)P2, it is down-regulated. Interacts with MYO7A. In terms of processing, phosphorylated on both serine and threonine residues.

The protein resides in the cytoplasm. It is found in the cytoskeleton. The protein localises to the perinuclear region. Its subcellular location is the cell projection. It localises to the stereocilium. Functionally, actin-binding protein involved in motile and morphological processes. Inhibits actin polymerization, likely by sequestering G-actin. By capping the barbed ends of filaments, it also regulates motility. Seems to play an important role in clathrin-mediated endocytosis and distribution of endocytic organelles. May play a role in regulating the mature length of the middle and short rows of stereocilia. The sequence is that of Twinfilin-2 (TWF2) from Pongo abelii (Sumatran orangutan).